We begin with the raw amino-acid sequence, 150 residues long: D-aminoacyl-tRNA deacylase (150 aa).

The short motif at 137–138 (GP) is the Gly-cisPro motif, important for rejection of L-amino acids element.

This sequence belongs to the DTD family. As to quaternary structure, homodimer.

The protein resides in the cytoplasm. It carries out the reaction glycyl-tRNA(Ala) + H2O = tRNA(Ala) + glycine + H(+). It catalyses the reaction a D-aminoacyl-tRNA + H2O = a tRNA + a D-alpha-amino acid + H(+). In terms of biological role, an aminoacyl-tRNA editing enzyme that deacylates mischarged D-aminoacyl-tRNAs. Also deacylates mischarged glycyl-tRNA(Ala), protecting cells against glycine mischarging by AlaRS. Acts via tRNA-based rather than protein-based catalysis; rejects L-amino acids rather than detecting D-amino acids in the active site. By recycling D-aminoacyl-tRNA to D-amino acids and free tRNA molecules, this enzyme counteracts the toxicity associated with the formation of D-aminoacyl-tRNA entities in vivo and helps enforce protein L-homochirality. The protein is D-aminoacyl-tRNA deacylase of Geotalea daltonii (strain DSM 22248 / JCM 15807 / FRC-32) (Geobacter daltonii).